The primary structure comprises 231 residues: Phosphatidylserine decarboxylase proenzyme (231 aa).

The active-site Schiff-base intermediate with substrate; via pyruvic acid is the serine 188. Serine 188 carries the post-translational modification Pyruvic acid (Ser); by autocatalysis.

It belongs to the phosphatidylserine decarboxylase family. PSD-A subfamily. In terms of assembly, heterodimer of a large membrane-associated beta subunit and a small pyruvoyl-containing alpha subunit. Requires pyruvate as cofactor. In terms of processing, is synthesized initially as an inactive proenzyme. Formation of the active enzyme involves a self-maturation process in which the active site pyruvoyl group is generated from an internal serine residue via an autocatalytic post-translational modification. Two non-identical subunits are generated from the proenzyme in this reaction, and the pyruvate is formed at the N-terminus of the alpha chain, which is derived from the carboxyl end of the proenzyme. The post-translation cleavage follows an unusual pathway, termed non-hydrolytic serinolysis, in which the side chain hydroxyl group of the serine supplies its oxygen atom to form the C-terminus of the beta chain, while the remainder of the serine residue undergoes an oxidative deamination to produce ammonia and the pyruvoyl prosthetic group on the alpha chain.

The protein localises to the cell membrane. It catalyses the reaction a 1,2-diacyl-sn-glycero-3-phospho-L-serine + H(+) = a 1,2-diacyl-sn-glycero-3-phosphoethanolamine + CO2. It functions in the pathway phospholipid metabolism; phosphatidylethanolamine biosynthesis; phosphatidylethanolamine from CDP-diacylglycerol: step 2/2. Its function is as follows. Catalyzes the formation of phosphatidylethanolamine (PtdEtn) from phosphatidylserine (PtdSer). The polypeptide is Phosphatidylserine decarboxylase proenzyme (Rickettsia bellii (strain OSU 85-389)).